Reading from the N-terminus, the 480-residue chain is Adenosylhomocysteinase (480 aa).

Residues Thr-63, Asp-142, and Glu-203 each contribute to the substrate site. An NAD(+)-binding site is contributed by 204–206 (TTT). Residues Lys-233 and Asp-237 each coordinate substrate. NAD(+) is bound by residues Asn-238, 267–272 (GYGDVG), Glu-290, Asn-325, 346–348 (IGH), and Asn-394.

Belongs to the adenosylhomocysteinase family. NAD(+) serves as cofactor.

The protein resides in the cytoplasm. The catalysed reaction is S-adenosyl-L-homocysteine + H2O = L-homocysteine + adenosine. Its pathway is amino-acid biosynthesis; L-homocysteine biosynthesis; L-homocysteine from S-adenosyl-L-homocysteine: step 1/1. May play a key role in the regulation of the intracellular concentration of adenosylhomocysteine. The sequence is that of Adenosylhomocysteinase from Xanthomonas axonopodis pv. citri (strain 306).